A 242-amino-acid chain; its full sequence is NAD-dependent protein deacylase 1 (242 aa).

Residues Met1 to Gly242 form the Deacetylase sirtuin-type domain. Gly21–Trp40 is a binding site for NAD(+). The substrate site is built by Tyr65 and Arg68. Gln99–Asp102 contributes to the NAD(+) binding site. His117 functions as the Proton acceptor in the catalytic mechanism. Residues Cys125, Cys128, Cys146, and Cys149 each contribute to the Zn(2+) site. NAD(+)-binding positions include Gly186–Ser188 and Glu241.

It belongs to the sirtuin family. Class III subfamily. Zn(2+) is required as a cofactor.

The protein localises to the cytoplasm. The catalysed reaction is N(6)-acetyl-L-lysyl-[protein] + NAD(+) + H2O = 2''-O-acetyl-ADP-D-ribose + nicotinamide + L-lysyl-[protein]. It catalyses the reaction N(6)-succinyl-L-lysyl-[protein] + NAD(+) + H2O = 2''-O-succinyl-ADP-D-ribose + nicotinamide + L-lysyl-[protein]. NAD-dependent lysine deacetylase and desuccinylase that specifically removes acetyl and succinyl groups on target proteins. Modulates the activities of several proteins which are inactive in their acylated form. This Caldanaerobacter subterraneus subsp. tengcongensis (strain DSM 15242 / JCM 11007 / NBRC 100824 / MB4) (Thermoanaerobacter tengcongensis) protein is NAD-dependent protein deacylase 1.